The following is a 325-amino-acid chain: Chain length determinant protein (325 aa).

Residues 1–31 are Cytoplasmic-facing; the sequence is MRVENNNVSGQNLDPEQIDLIDLLVQLWRGK. The chain crosses the membrane as a helical span at residues 32–52; sequence MTIIISVIVAIVLAIGYLVVA. Residues 53-294 lie on the Periplasmic side of the membrane; sequence KEKWTSTAIV…LPIRRDSPKK (242 aa). A helical membrane pass occupies residues 295–315; that stretch reads AITLILAVLLGGMVGAGIVLG. The Cytoplasmic segment spans residues 316–325; the sequence is RNALRNYNAK.

Belongs to the WzzB/Cld/Rol family.

It is found in the cell inner membrane. Its pathway is bacterial outer membrane biogenesis; lipopolysaccharide biosynthesis. Its function is as follows. Confers a modal distribution of chain length on the O-antigen component of lipopolysaccharide (LPS). Gives rise to a reduced number of short chain molecules and increases in numbers of longer molecules, with a modal value of 13 (in strain O111/M92) and of 17 (in strain K12). This is Chain length determinant protein (wzzB) from Escherichia coli.